The sequence spans 218 residues: uncharacterized protein (218 aa).

Residues 1 to 28 (MLSLQCLPPFFISVPNRSTNSCSTAPLR) constitute a chloroplast transit peptide.

Belongs to the SixA phosphatase family.

The protein localises to the plastid. It is found in the chloroplast. This is an uncharacterized protein from Arabidopsis thaliana (Mouse-ear cress).